The primary structure comprises 350 residues: Holliday junction branch migration complex subunit RuvB (350 aa).

The interval 4-184 is large ATPase domain (RuvB-L); sequence TDRLIAAQPQ…FGIVQRLEFY (181 aa). ATP is bound by residues I23, R24, G65, K68, T69, T70, 131–133, R174, Y184, and R221; that span reads EDY. T69 provides a ligand contact to Mg(2+). Residues 185-255 are small ATPAse domain (RuvB-S); that stretch reads AVEELTEIVV…IADQALNMLH (71 aa). Residues 258–350 are head domain (RuvB-H); sequence RHGLDHMDRR…PLTPPGESDA (93 aa). The DNA site is built by R294, R313, and R318.

The protein belongs to the RuvB family. Homohexamer. Forms an RuvA(8)-RuvB(12)-Holliday junction (HJ) complex. HJ DNA is sandwiched between 2 RuvA tetramers; dsDNA enters through RuvA and exits via RuvB. An RuvB hexamer assembles on each DNA strand where it exits the tetramer. Each RuvB hexamer is contacted by two RuvA subunits (via domain III) on 2 adjacent RuvB subunits; this complex drives branch migration. In the full resolvosome a probable DNA-RuvA(4)-RuvB(12)-RuvC(2) complex forms which resolves the HJ.

Its subcellular location is the cytoplasm. It carries out the reaction ATP + H2O = ADP + phosphate + H(+). Functionally, the RuvA-RuvB-RuvC complex processes Holliday junction (HJ) DNA during genetic recombination and DNA repair, while the RuvA-RuvB complex plays an important role in the rescue of blocked DNA replication forks via replication fork reversal (RFR). RuvA specifically binds to HJ cruciform DNA, conferring on it an open structure. The RuvB hexamer acts as an ATP-dependent pump, pulling dsDNA into and through the RuvAB complex. RuvB forms 2 homohexamers on either side of HJ DNA bound by 1 or 2 RuvA tetramers; 4 subunits per hexamer contact DNA at a time. Coordinated motions by a converter formed by DNA-disengaged RuvB subunits stimulates ATP hydrolysis and nucleotide exchange. Immobilization of the converter enables RuvB to convert the ATP-contained energy into a lever motion, pulling 2 nucleotides of DNA out of the RuvA tetramer per ATP hydrolyzed, thus driving DNA branch migration. The RuvB motors rotate together with the DNA substrate, which together with the progressing nucleotide cycle form the mechanistic basis for DNA recombination by continuous HJ branch migration. Branch migration allows RuvC to scan DNA until it finds its consensus sequence, where it cleaves and resolves cruciform DNA. This Chromohalobacter salexigens (strain ATCC BAA-138 / DSM 3043 / CIP 106854 / NCIMB 13768 / 1H11) protein is Holliday junction branch migration complex subunit RuvB.